Reading from the N-terminus, the 144-residue chain is Small ribosomal subunit protein bS6 (144 aa).

The interval 95–144 (ELEEGPSAMMQSKSRDDRPRRGEGDDRPRRDDREDRPRRDREPRRMEGGE) is disordered. Over residues 107 to 144 (KSRDDRPRRGEGDDRPRRDDREDRPRRDREPRRMEGGE) the composition is skewed to basic and acidic residues.

This sequence belongs to the bacterial ribosomal protein bS6 family.

Its function is as follows. Binds together with bS18 to 16S ribosomal RNA. This chain is Small ribosomal subunit protein bS6, found in Paramagnetospirillum magneticum (strain ATCC 700264 / AMB-1) (Magnetospirillum magneticum).